The sequence spans 387 residues: MSVIKMTDLDLAGKRVLIRADLNVPVKDGKVTSDARIRASLPTIETALKQGAKVMVTSHLGRPTEGEYNEEFSLLPVVNYLKDKLSAPVRLAKDYLDGVEIAAGELVVLENVRFNKGEKKDDETLSKKYAALCDVYVMDAFGTAHRAQASTHGVGKFAPIACAGPLLSAELEALGKALGNPARPMVAIVGGSKVSTKLTVLGALSKIADQLIVGGGIANTFVAAQGNNVGKSLYEADLIPEAKRLLETCDIPVPTDVRVATEFSETATATLKPANQIKDDEQILDLGDESAERLAEILKNAKTILWNGPVGVFEFPNFRKGTEIVARAIAESEAFSIAGGGDTLAAIDLFGIADQISYISTGGGAFLEFVEGKKLPAVVMLEERAKQ.

Substrate-binding positions include Asp-21–Asn-23, Arg-36, His-59–Arg-62, Arg-113, and Arg-146. ATP contacts are provided by residues Lys-197, Glu-314, and Gly-340–Thr-343.

Belongs to the phosphoglycerate kinase family. Monomer.

It is found in the cytoplasm. The catalysed reaction is (2R)-3-phosphoglycerate + ATP = (2R)-3-phospho-glyceroyl phosphate + ADP. It functions in the pathway carbohydrate degradation; glycolysis; pyruvate from D-glyceraldehyde 3-phosphate: step 2/5. The chain is Phosphoglycerate kinase from Yersinia enterocolitica serotype O:8 / biotype 1B (strain NCTC 13174 / 8081).